The primary structure comprises 429 residues: Glutamate-1-semialdehyde 2,1-aminomutase (429 aa).

Lys-265 carries the N6-(pyridoxal phosphate)lysine modification.

This sequence belongs to the class-III pyridoxal-phosphate-dependent aminotransferase family. HemL subfamily. Homodimer. Pyridoxal 5'-phosphate is required as a cofactor.

It is found in the cytoplasm. It carries out the reaction (S)-4-amino-5-oxopentanoate = 5-aminolevulinate. The protein operates within porphyrin-containing compound metabolism; protoporphyrin-IX biosynthesis; 5-aminolevulinate from L-glutamyl-tRNA(Glu): step 2/2. The protein is Glutamate-1-semialdehyde 2,1-aminomutase of Legionella pneumophila (strain Lens).